Reading from the N-terminus, the 334-residue chain is Transaldolase (334 aa).

Position 2 is an N-acetylserine (Ser-2). The active-site Schiff-base intermediate with substrate is the Lys-143.

This sequence belongs to the transaldolase family. Type 1 subfamily. As to quaternary structure, homodimer.

The catalysed reaction is D-sedoheptulose 7-phosphate + D-glyceraldehyde 3-phosphate = D-erythrose 4-phosphate + beta-D-fructose 6-phosphate. It functions in the pathway carbohydrate degradation; pentose phosphate pathway; D-glyceraldehyde 3-phosphate and beta-D-fructose 6-phosphate from D-ribose 5-phosphate and D-xylulose 5-phosphate (non-oxidative stage): step 2/3. Its function is as follows. Transaldolase is important for the balance of metabolites in the pentose-phosphate pathway. This Kluyveromyces lactis (strain ATCC 8585 / CBS 2359 / DSM 70799 / NBRC 1267 / NRRL Y-1140 / WM37) (Yeast) protein is Transaldolase (TAL1).